The sequence spans 230 residues: Demethylmenaquinone methyltransferase (230 aa).

Residues Thr-62, Asp-80, 100–101 (DG), and Ser-117 each bind S-adenosyl-L-methionine.

The protein belongs to the class I-like SAM-binding methyltransferase superfamily. MenG/UbiE family.

The enzyme catalyses a 2-demethylmenaquinol + S-adenosyl-L-methionine = a menaquinol + S-adenosyl-L-homocysteine + H(+). It functions in the pathway quinol/quinone metabolism; menaquinone biosynthesis; menaquinol from 1,4-dihydroxy-2-naphthoate: step 2/2. In terms of biological role, methyltransferase required for the conversion of demethylmenaquinol (DMKH2) to menaquinol (MKH2). The sequence is that of Demethylmenaquinone methyltransferase from Corynebacterium glutamicum (strain ATCC 13032 / DSM 20300 / JCM 1318 / BCRC 11384 / CCUG 27702 / LMG 3730 / NBRC 12168 / NCIMB 10025 / NRRL B-2784 / 534).